The sequence spans 376 residues: Cytochrome b (376 aa).

4 consecutive transmembrane segments (helical) span residues 28-48 (YGFLLGIIFFIQILTGVFLAS), 72-94 (WCFRYMHATGASLVFFLTYLHIL), 107-127 (SWISGLIIFALFIVTAFIGYV), and 169-189 (FFVLHFILPFVALCIVFIHIF). The heme b site is built by H78 and H92. Residues H173 and H187 each contribute to the heme b site. An a ubiquinone-binding site is contributed by H192. A run of 4 helical transmembrane segments spans residues 214–234 (LLSLDVKGFNNILILFLIQSI), 274–294 (IPSKNAGLVIVVASLQLLFLL), 317–337 (VPIIWFMCSFYALLWIGCQLP), and 340–360 (IFILYGRLFIILFFSSGLFAL).

Belongs to the cytochrome b family. The main subunits of complex b-c1 are: cytochrome b, cytochrome c1 and the Rieske protein. It depends on heme b as a cofactor.

It localises to the mitochondrion inner membrane. Its function is as follows. Component of the ubiquinol-cytochrome c reductase complex (complex III or cytochrome b-c1 complex) that is part of the mitochondrial respiratory chain. The b-c1 complex mediates electron transfer from ubiquinol to cytochrome c. Contributes to the generation of a proton gradient across the mitochondrial membrane that is then used for ATP synthesis. The protein is Cytochrome b (MT-CYB) of Plasmodium chabaudi.